We begin with the raw amino-acid sequence, 24 residues long: Ascaphin-4 (24 aa).

Expressed by the skin glands.

It is found in the secreted. In terms of biological role, antimicrobial peptide that shows higher potency against Gram-negative bacteria than against Gram-positive bacteria. Has a very week hemolytic activity. The protein is Ascaphin-4 of Ascaphus truei (Coastal tailed frog).